The chain runs to 73 residues: MAFLKKSIFLALFLGMVSLSICEEEKRENEGEEEQEDDEQSEMKRGLWSTIKNVGKEAAIAAGKAALGALGEQ.

An N-terminal signal peptide occupies residues Met1–Cys22. Positions Glu23 to Met43 are cleaved as a propeptide — removed in mature form. The segment at Glu25–Gly46 is disordered. The span at Glu30–Gln40 shows a compositional bias: acidic residues. A Leucine amide modification is found at Leu70. Residues Glu72–Gln73 constitute a propeptide, removed in mature form.

In terms of tissue distribution, expressed by the skin glands.

The protein localises to the secreted. Functionally, has antiparasitic activity against trypomastigote form of T.cruzi (IC(50)=0.68 uM) in vitro but not against L.infantum. Probably acts by permeabilizing cell membranes. In vitro, shows no cytotoxicity against macrophages. Has antibacterial activity. This chain is Dermaseptin-1, found in Pithecopus nordestinus (Northeastern Brazilian leaf frog).